Reading from the N-terminus, the 280-residue chain is Chaperone protein LppX (280 aa).

An N-terminal signal peptide occupies residues 1-18; it reads MRKWLIFLLIAAVAGLSA. Cys19 carries N-palmitoyl cysteine lipidation. Cys19 is lipidated: S-diacylglycerol cysteine.

It localises to the cell membrane. Is required for the expression of the adjacently encoded xylanase Xyn11E in an active form. LppX seems to act as a specific chaperone necessary for the correct folding of the xylanase during secretion across the cytoplasmic membrane. This Paenibacillus barcinonensis protein is Chaperone protein LppX.